The primary structure comprises 1240 residues: ABC transporter B family member 17 (1240 aa).

The region spanning Met35–Glu324 is the ABC transmembrane type-1 1 domain. The chain crosses the membrane as a helical span at residues Ala36–Phe56. An N-linked (GlcNAc...) asparagine glycan is attached at Asn70. 5 helical membrane passes run Val81–Cys101, Leu158–Trp180, Ile184–Ser206, Gly264–Gly284, and Gly296–Leu316. Residues Val359–Ser595 form the ABC transporter 1 domain. Gly394–Ser401 lines the ATP pocket. 3 N-linked (GlcNAc...) asparagine glycosylation sites follow: Asn542, Asn609, and Asn642. An ABC transmembrane type-1 2 domain is found at Ala672–Arg960. Transmembrane regions (helical) follow at residues Leu681–Phe701 and Ile714–His734. Residue Asn769 is glycosylated (N-linked (GlcNAc...) asparagine). A run of 4 helical transmembrane segments spans residues Met793–Trp815, Leu817–Leu839, Trp896–Tyr919, and Leu923–Thr943. The ABC transporter 2 domain maps to Ile995–Ala1233. Asn1015 carries an N-linked (GlcNAc...) asparagine glycan. Residue Gly1030–Ser1037 coordinates ATP.

It belongs to the ABC transporter superfamily. ABCB family. Multidrug resistance exporter (TC 3.A.1.201) subfamily.

Its subcellular location is the membrane. The protein is ABC transporter B family member 17 (ABCB17) of Arabidopsis thaliana (Mouse-ear cress).